The chain runs to 335 residues: NADH-quinone oxidoreductase subunit H (335 aa).

Transmembrane regions (helical) follow at residues 11 to 31 (VILT…CGAL), 81 to 101 (VIFT…FVVI), 114 to 134 (IGLL…LFAG), 154 to 174 (VSYE…VGSF), 187 to 207 (LWFI…GVAV), 238 to 258 (FFVG…TLFF), 270 to 290 (QLSF…FILL), and 307 to 327 (WKFC…IVLY).

It belongs to the complex I subunit 1 family. As to quaternary structure, NDH-1 is composed of 13 different subunits. Subunits NuoA, H, J, K, L, M, N constitute the membrane sector of the complex.

It localises to the cell inner membrane. The catalysed reaction is a quinone + NADH + 5 H(+)(in) = a quinol + NAD(+) + 4 H(+)(out). In terms of biological role, NDH-1 shuttles electrons from NADH, via FMN and iron-sulfur (Fe-S) centers, to quinones in the respiratory chain. The immediate electron acceptor for the enzyme in this species is believed to be ubiquinone. Couples the redox reaction to proton translocation (for every two electrons transferred, four hydrogen ions are translocated across the cytoplasmic membrane), and thus conserves the redox energy in a proton gradient. This subunit may bind ubiquinone. This is NADH-quinone oxidoreductase subunit H from Pseudomonas putida (strain ATCC 700007 / DSM 6899 / JCM 31910 / BCRC 17059 / LMG 24140 / F1).